Reading from the N-terminus, the 561-residue chain is Membrane protein insertase YidC (561 aa).

Helical transmembrane passes span 7 to 27, 342 to 362, 368 to 388, 438 to 458, 469 to 489, and 516 to 536; these read ILIVALAIVSYVMVLKWNQDY, LELTVDYGFLWFIAQPIFWLL, LLGNWGWSIIVLTMLIKGLFF, LGGCLPILVQMPVFLALYWVL, WMLWITDLSIKDPFFILPIIM, and PIIFTFFFLWFPAGLVLYWVV.

Belongs to the OXA1/ALB3/YidC family. Type 1 subfamily. In terms of assembly, interacts with the Sec translocase complex via SecD. Specifically interacts with transmembrane segments of nascent integral membrane proteins during membrane integration.

It is found in the cell inner membrane. Required for the insertion and/or proper folding and/or complex formation of integral membrane proteins into the membrane. Involved in integration of membrane proteins that insert both dependently and independently of the Sec translocase complex, as well as at least some lipoproteins. Aids folding of multispanning membrane proteins. This chain is Membrane protein insertase YidC, found in Pseudomonas entomophila (strain L48).